We begin with the raw amino-acid sequence, 524 residues long: Glutamyl-tRNA(Gln) amidotransferase subunit A, mitochondrial (524 aa).

Active-site charge relay system residues include Lys76 and Ser171. Ser195 (acyl-ester intermediate) is an active-site residue.

This sequence belongs to the amidase family. GatA subfamily. In terms of assembly, subunit of the heterotrimeric GatCAB amidotransferase (AdT) complex, composed of A (qrsl1), B (gatb) and C (gatc) subunits.

The protein resides in the mitochondrion. It catalyses the reaction L-glutamyl-tRNA(Gln) + L-glutamine + ATP + H2O = L-glutaminyl-tRNA(Gln) + L-glutamate + ADP + phosphate + H(+). Functionally, allows the formation of correctly charged Gln-tRNA(Gln) through the transamidation of misacylated Glu-tRNA(Gln) in the mitochondria. The reaction takes place in the presence of glutamine and ATP through an activated gamma-phospho-Glu-tRNA(Gln). This chain is Glutamyl-tRNA(Gln) amidotransferase subunit A, mitochondrial (qrsl1), found in Xenopus tropicalis (Western clawed frog).